The sequence spans 251 residues: uncharacterized protein (251 aa).

A divalent metal cation is bound by residues His5, His7, Glu101, His132, His163, and Asp209.

It belongs to the metallo-dependent hydrolases superfamily. TatD-type hydrolase family. It depends on a divalent metal cation as a cofactor.

This is an uncharacterized protein from Methanocaldococcus jannaschii (strain ATCC 43067 / DSM 2661 / JAL-1 / JCM 10045 / NBRC 100440) (Methanococcus jannaschii).